The following is a 181-amino-acid chain: Adenine phosphoribosyltransferase (181 aa).

It belongs to the purine/pyrimidine phosphoribosyltransferase family. As to quaternary structure, homodimer.

The protein localises to the cytoplasm. The enzyme catalyses AMP + diphosphate = 5-phospho-alpha-D-ribose 1-diphosphate + adenine. It participates in purine metabolism; AMP biosynthesis via salvage pathway; AMP from adenine: step 1/1. Catalyzes a salvage reaction resulting in the formation of AMP, that is energically less costly than de novo synthesis. The chain is Adenine phosphoribosyltransferase from Brucella anthropi (strain ATCC 49188 / DSM 6882 / CCUG 24695 / JCM 21032 / LMG 3331 / NBRC 15819 / NCTC 12168 / Alc 37) (Ochrobactrum anthropi).